A 240-amino-acid polypeptide reads, in one-letter code: Lipoprotein-releasing system ATP-binding protein LolD (240 aa).

Positions 15–240 constitute an ABC transporter domain; it reads IRAESLGKTY…GLRELTSAEV (226 aa). 51–58 is a binding site for ATP; that stretch reads GASGAGKS.

Belongs to the ABC transporter superfamily. Lipoprotein translocase (TC 3.A.1.125) family. In terms of assembly, the complex is composed of two ATP-binding proteins (LolD) and two transmembrane proteins (LolC and LolE).

The protein resides in the cell inner membrane. In terms of biological role, part of the ABC transporter complex LolCDE involved in the translocation of mature outer membrane-directed lipoproteins, from the inner membrane to the periplasmic chaperone, LolA. Responsible for the formation of the LolA-lipoprotein complex in an ATP-dependent manner. This is Lipoprotein-releasing system ATP-binding protein LolD from Xylella fastidiosa (strain Temecula1 / ATCC 700964).